Here is a 264-residue protein sequence, read N- to C-terminus: Phosphoribosylaminoimidazole-succinocarboxamide synthase 1 (264 aa).

Belongs to the SAICAR synthetase family.

It carries out the reaction 5-amino-1-(5-phospho-D-ribosyl)imidazole-4-carboxylate + L-aspartate + ATP = (2S)-2-[5-amino-1-(5-phospho-beta-D-ribosyl)imidazole-4-carboxamido]succinate + ADP + phosphate + 2 H(+). Its pathway is purine metabolism; IMP biosynthesis via de novo pathway; 5-amino-1-(5-phospho-D-ribosyl)imidazole-4-carboxamide from 5-amino-1-(5-phospho-D-ribosyl)imidazole-4-carboxylate: step 1/2. The chain is Phosphoribosylaminoimidazole-succinocarboxamide synthase 1 (purC1) from Mesorhizobium japonicum (strain LMG 29417 / CECT 9101 / MAFF 303099) (Mesorhizobium loti (strain MAFF 303099)).